A 337-amino-acid polypeptide reads, in one-letter code: MLNFLQSVQFVKEVEKKIIEYDKDIAFNEAIILYEIAKHDADLVKNLASTINQHYFKNTIELCSIYPAKVGLCPQDCKFCSQSIHHSCLIEIKDLAALDEVIEYLEYVISFPIKRFCLVTSGEKLDDSEFEKILDIYSHISKNYNILLCASLGFLTQERAKKLLKVGVVKYHNNLETSSTYFKNICSTHTQQQKIETLKIAKEAGLQICSGGIISMGEDMIERIKLAFELRELDVDSVPINILNPIKGTPLEDIKIIDKNEIFITLALFRIVLPKKTILLAGGKENALGDMEKMAYECGVNGCMVGNYLTTRGMGIREKIEMLESLDLKFQTNMHNN.

The Radical SAM core domain occupies 55–284 (YFKNTIELCS…KKTILLAGGK (230 aa)). Residues C73, C77, and C80 each coordinate [4Fe-4S] cluster. [2Fe-2S] cluster-binding residues include C117, C149, and C209.

This sequence belongs to the radical SAM superfamily. Biotin synthase family. Homodimer. Requires [4Fe-4S] cluster as cofactor. The cofactor is [2Fe-2S] cluster.

The catalysed reaction is (4R,5S)-dethiobiotin + (sulfur carrier)-SH + 2 reduced [2Fe-2S]-[ferredoxin] + 2 S-adenosyl-L-methionine = (sulfur carrier)-H + biotin + 2 5'-deoxyadenosine + 2 L-methionine + 2 oxidized [2Fe-2S]-[ferredoxin]. It functions in the pathway cofactor biosynthesis; biotin biosynthesis; biotin from 7,8-diaminononanoate: step 2/2. Functionally, catalyzes the conversion of dethiobiotin (DTB) to biotin by the insertion of a sulfur atom into dethiobiotin via a radical-based mechanism. The chain is Biotin synthase from Caldicellulosiruptor bescii (strain ATCC BAA-1888 / DSM 6725 / KCTC 15123 / Z-1320) (Anaerocellum thermophilum).